The following is a 310-amino-acid chain: tRNA uridine(34) hydroxylase (310 aa).

The region spanning 124–218 (SDPEVLLIDT…YFEEVPQEES (95 aa)) is the Rhodanese domain. Cys178 functions as the Cysteine persulfide intermediate in the catalytic mechanism.

Belongs to the TrhO family.

It carries out the reaction uridine(34) in tRNA + AH2 + O2 = 5-hydroxyuridine(34) in tRNA + A + H2O. Functionally, catalyzes oxygen-dependent 5-hydroxyuridine (ho5U) modification at position 34 in tRNAs. This chain is tRNA uridine(34) hydroxylase, found in Pseudomonas putida (strain W619).